The following is a 325-amino-acid chain: Glutarate 2-hydroxylase (325 aa).

The Fe cation site is built by His160, Asp162, and His292.

The protein belongs to the glutarate hydroxylase family. As to quaternary structure, homotetramer. The cofactor is Fe(2+).

The enzyme catalyses glutarate + 2-oxoglutarate + O2 = (S)-2-hydroxyglutarate + succinate + CO2. It functions in the pathway amino-acid degradation. Its function is as follows. Acts as an alpha-ketoglutarate-dependent dioxygenase catalyzing hydroxylation of glutarate (GA) to L-2-hydroxyglutarate (L2HG). Functions in a L-lysine degradation pathway that proceeds via cadaverine, glutarate and L-2-hydroxyglutarate. Is extremely specific for glutarate, but it can use both 2-oxoglutarate and 2-oxoadipate (2OA) as a cosubstrate for L2HG formation. The protein is Glutarate 2-hydroxylase of Pseudomonas putida (strain ATCC 47054 / DSM 6125 / CFBP 8728 / NCIMB 11950 / KT2440).